The primary structure comprises 456 residues: Bifunctional protein GlmU (456 aa).

The pyrophosphorylase stretch occupies residues 1–229 (MLNSAMSVVI…ISETDGVNNR (229 aa)). Residues 11–14 (LAAG), K25, Q76, 81–82 (GT), 103–105 (YGD), G140, E154, N169, and N227 contribute to the UDP-N-acetyl-alpha-D-glucosamine site. Residue D105 coordinates Mg(2+). Mg(2+) is bound at residue N227. The interval 230 to 250 (LQLSRLERIYQAEQAEKLLLS) is linker. Residues 251–456 (GVMLRDPARF…QGWQRPVKKK (206 aa)) are N-acetyltransferase. R333 and K351 together coordinate UDP-N-acetyl-alpha-D-glucosamine. The active-site Proton acceptor is the H363. Y366 and N377 together coordinate UDP-N-acetyl-alpha-D-glucosamine. Acetyl-CoA-binding positions include A380, 386-387 (NY), S405, A423, and R440.

This sequence in the N-terminal section; belongs to the N-acetylglucosamine-1-phosphate uridyltransferase family. In the C-terminal section; belongs to the transferase hexapeptide repeat family. In terms of assembly, homotrimer. Requires Mg(2+) as cofactor.

It localises to the cytoplasm. The catalysed reaction is alpha-D-glucosamine 1-phosphate + acetyl-CoA = N-acetyl-alpha-D-glucosamine 1-phosphate + CoA + H(+). The enzyme catalyses N-acetyl-alpha-D-glucosamine 1-phosphate + UTP + H(+) = UDP-N-acetyl-alpha-D-glucosamine + diphosphate. It functions in the pathway nucleotide-sugar biosynthesis; UDP-N-acetyl-alpha-D-glucosamine biosynthesis; N-acetyl-alpha-D-glucosamine 1-phosphate from alpha-D-glucosamine 6-phosphate (route II): step 2/2. Its pathway is nucleotide-sugar biosynthesis; UDP-N-acetyl-alpha-D-glucosamine biosynthesis; UDP-N-acetyl-alpha-D-glucosamine from N-acetyl-alpha-D-glucosamine 1-phosphate: step 1/1. The protein operates within bacterial outer membrane biogenesis; LPS lipid A biosynthesis. Catalyzes the last two sequential reactions in the de novo biosynthetic pathway for UDP-N-acetylglucosamine (UDP-GlcNAc). The C-terminal domain catalyzes the transfer of acetyl group from acetyl coenzyme A to glucosamine-1-phosphate (GlcN-1-P) to produce N-acetylglucosamine-1-phosphate (GlcNAc-1-P), which is converted into UDP-GlcNAc by the transfer of uridine 5-monophosphate (from uridine 5-triphosphate), a reaction catalyzed by the N-terminal domain. This chain is Bifunctional protein GlmU, found in Salmonella dublin (strain CT_02021853).